We begin with the raw amino-acid sequence, 715 residues long: Integrator complex subunit 13 (715 aa).

Disordered stretches follow at residues 572–612 (KPPE…SERI) and 626–659 (AEVIKDSPDSPEPPNKKPHIVIEDTGPAEKSKGP). A Nuclear localization signal (NLS) motif is present at residues 581-591 (KRGRKREDKEE). The interval 658–703 (GPMSLLSLWSSRINTANSRKHQEFVGRLNSVNNKAELYQHLKEENG) is cleavage module binding motif (CMBM).

Belongs to the Integrator subunit 13 family. As to quaternary structure, component of the Integrator complex, composed of core subunits INTS1, INTS2, INTS3, INTS4, INTS5, INTS6, INTS7, INTS8, INTS9/RC74, INTS10, INTS11/CPSF3L, INTS12, INTS13, INTS14 and INTS15. The core complex associates with protein phosphatase 2A subunits PPP2CA and PPP2R1A, to form the Integrator-PP2A (INTAC) complex. INTS13 is part of the tail subcomplex, composed of INTS10, INTS13, INTS14 and INTS15.

The protein resides in the nucleus. It is found in the cytoplasm. Its function is as follows. Component of the integrator complex, a multiprotein complex that terminates RNA polymerase II (Pol II) transcription in the promoter-proximal region of genes. The integrator complex provides a quality checkpoint during transcription elongation by driving premature transcription termination of transcripts that are unfavorably configured for transcriptional elongation: the complex terminates transcription by (1) catalyzing dephosphorylation of the C-terminal domain (CTD) of Pol II subunit POLR2A/RPB1 and SUPT5H/SPT5, (2) degrading the exiting nascent RNA transcript via endonuclease activity and (3) promoting the release of Pol II from bound DNA. The integrator complex is also involved in terminating the synthesis of non-coding Pol II transcripts, such as enhancer RNAs (eRNAs), small nuclear RNAs (snRNAs), telomerase RNAs and long non-coding RNAs (lncRNAs). Within the integrator complex, INTS13 is part of the integrator tail module and acts as a platform for the recruitment of transcription factors at promoters. Plays a role in gastrulation and early embryogenesis. This is Integrator complex subunit 13 from Xenopus laevis (African clawed frog).